Consider the following 516-residue polypeptide: Maturase K (516 aa).

The protein belongs to the intron maturase 2 family. MatK subfamily.

Its subcellular location is the plastid. The protein resides in the chloroplast. Functionally, usually encoded in the trnK tRNA gene intron. Probably assists in splicing its own and other chloroplast group II introns. The polypeptide is Maturase K (Galanthus nivalis (Common snowdrop)).